We begin with the raw amino-acid sequence, 644 residues long: Protein cueball (644 aa).

The signal sequence occupies residues 1–26; it reads MIRIRFGMDVLLVLLLATCLLSPAHG. Over 27–531 the chain is Extracellular; it reads TPLEWDFAVT…VCLTPKVWTS (505 aa). N-linked (GlcNAc...) asparagine glycans are attached at residues Asn-82 and Asn-108. LDL-receptor class B repeat units follow at residues 121–166, 167–211, and 212–257; these read MNLF…DVCR, RKLY…DQLS, and DRLF…TNDA. Asn-175, Asn-190, and Asn-196 each carry an N-linked (GlcNAc...) asparagine glycan. An N-linked (GlcNAc...) asparagine glycan is attached at Asn-313. EGF-like domains lie at 398–430 and 433–471; these read EIRE…FTGE and EVSV…ARCE. Intrachain disulfides connect Cys-402–Cys-411, Cys-406–Cys-421, Cys-437–Cys-447, Cys-441–Cys-459, and Cys-461–Cys-470. 2 N-linked (GlcNAc...) asparagine glycosylation sites follow: Asn-473 and Asn-508. Residues 532–552 form a helical membrane-spanning segment; it reads SVIIILVIGIVSSLLLVAVIV. Residues 553–644 lie on the Cytoplasmic side of the membrane; that stretch reads HGIRRLYKPK…LIHNMEDDLY (92 aa).

Belongs to the cueball family.

The protein resides in the cell membrane. Has a role in spermatogenesis and oogenesis. The chain is Protein cueball from Drosophila erecta (Fruit fly).